Here is a 386-residue protein sequence, read N- to C-terminus: Succinate--CoA ligase [ADP-forming] subunit beta (386 aa).

Positions 9-244 constitute an ATP-grasp domain; it reads KEILRKYGVP…HDEEDPLETR (236 aa). ATP is bound by residues K46, 53-55, E99, C102, and E107; that span reads GRG. Mg(2+) contacts are provided by N199 and D213. Residues N264 and 321–323 each bind substrate; that span reads GIM.

The protein belongs to the succinate/malate CoA ligase beta subunit family. Heterotetramer of two alpha and two beta subunits. It depends on Mg(2+) as a cofactor.

It catalyses the reaction succinate + ATP + CoA = succinyl-CoA + ADP + phosphate. The enzyme catalyses GTP + succinate + CoA = succinyl-CoA + GDP + phosphate. Its pathway is carbohydrate metabolism; tricarboxylic acid cycle; succinate from succinyl-CoA (ligase route): step 1/1. Functionally, succinyl-CoA synthetase functions in the citric acid cycle (TCA), coupling the hydrolysis of succinyl-CoA to the synthesis of either ATP or GTP and thus represents the only step of substrate-level phosphorylation in the TCA. The beta subunit provides nucleotide specificity of the enzyme and binds the substrate succinate, while the binding sites for coenzyme A and phosphate are found in the alpha subunit. In Rickettsia felis (strain ATCC VR-1525 / URRWXCal2) (Rickettsia azadi), this protein is Succinate--CoA ligase [ADP-forming] subunit beta.